The following is a 410-amino-acid chain: WD repeat and FYVE domain-containing protein 1 (410 aa).

6 WD repeats span residues 22–61 (GHQDAVTAALLIPKEDGVITASEDRTIRVWLKRDSGQYWP), 66–105 (TMASPCSAMAYHHDSRRIFVGQDNGAVMEFHVSEDFNKMN), 112–150 (AHQNRVSAIIFSLATEWVISTGHDKCVSWMCTRSGNMLG), 153–192 (FFTSWASCLQYDFDTQYAFVGDYSGQITLLKLEQNTCSVI), 197–236 (GHEGSVACLWWDPIQRLLFSGASDNSIIMWDIGGRKGRTL), and 240–279 (GHHDKVQSLCYLQLTRQLVSCSSDGGIAVWNMDVSREEAP). The FYVE-type zinc-finger motif lies at 281-352 (WLESDSCQKC…VCDSCYDSIK (72 aa)). Cys-287, Cys-290, Cys-314, Cys-317, Cys-322, Cys-325, Cys-344, and Cys-347 together coordinate Zn(2+). The WD 7 repeat unit spans residues 364-403 (EGKHNISHMSMDIARGLMVTCGTDRIVKIWDMTPVVGCSL). Phosphoserine is present on Ser-408.

As to quaternary structure, binds PtdIns3P in vitro with high specificity over other phosphoinositides. Interacts (via WD repeat 2) with tyrosine-phosphorylated TLR3 (via TIR domain) in response to poly(I:C). Interacts with TICAM1 in response to poly(I:C). Interacts with TLR4 in response to LPS.

The protein resides in the early endosome. Positively regulates TLR3- and TLR4-mediated signaling pathways by bridging the interaction between TLR3 or TLR4 and TICAM1. Promotes TLR3/4 ligand-induced activation of transcription factors IRF3 and NF-kappa-B, as well as the production of IFN-beta and inflammatory cytokines. The polypeptide is WD repeat and FYVE domain-containing protein 1 (WDFY1) (Homo sapiens (Human)).